The following is a 410-amino-acid chain: Lissencephaly-1 homolog B (410 aa).

A LisH domain is found at 7 to 39 (QRDELNRAIADYLRSNGYEEAYSTFKKEAELDV). A coiled-coil region spans residues 56 to 82 (TSVIRLQKKVMELESKLNEAKEEITLG). WD repeat units follow at residues 106–147 (GHRS…RTLK), 148–187 (GHTD…CIRT), 190–229 (GHDH…CVKT), 232–271 (GHRE…CKAE), 274–333 (EHEH…CLMT), 336–377 (GHDN…KTLS), and 379–410 (HEHF…WECR).

The protein belongs to the WD repeat LIS1/nudF family. Can self-associate. Component of the cytosolic PAF-AH (I) heterotetrameric enzyme, which is composed of PAFAH1B1 (beta), PAFAH1B2 (alpha2) and PAFAH1B3 (alpha1) subunits. The catalytic activity of the enzyme resides in the alpha1 (PAFAH1B3) and alpha2 (PAFAH1B2) subunits, whereas the beta subunit (PAFAH1B1) has regulatory activity. Trimer formation is not essential for the catalytic activity. Interacts with dynein, dynactin, nde1 and ndel1. In terms of tissue distribution, enriched in the photoreceptor cell layer.

It is found in the cytoplasm. The protein localises to the cytoskeleton. The protein resides in the microtubule organizing center. Its subcellular location is the centrosome. Its function is as follows. Regulatory subunit (beta subunit) of the cytosolic type I platelet-activating factor (PAF) acetylhydrolase (PAF-AH (I)), an enzyme that catalyzes the hydrolyze of the acetyl group at the sn-2 position of PAF and its analogs and participates in the PAF inactivation. Regulates the PAF-AH (I) activity in a catalytic dimer composition-dependent manner. Positively regulates the activity of the minus-end directed microtubule motor protein dynein. May enhance dynein-mediated microtubule sliding by targeting dynein to the microtubule plus end. Required for several dynein- and microtubule-dependent processes such as the maintenance of Golgi integrity, the peripheral transport of microtubule fragments and the coupling of the nucleus and centrosome. May be required for proliferation of neuronal precursors and neuronal migration. Involved in the positioning of nuclei in photoreceptor cells. The protein is Lissencephaly-1 homolog B (pafah1b1b) of Danio rerio (Zebrafish).